Here is a 99-residue protein sequence, read N- to C-terminus: uncharacterized protein (99 aa).

A TM2 domain is found at 32–79 (KKSVGIAVLLSFIIPGAGQMYLGRVGKGIILLLTCWLIIPWIYSIYDA). The next 2 helical transmembrane spans lie at 34–54 (SVGIAVLLSFIIPGAGQMYLG) and 56–76 (VGKGIILLLTCWLIIPWIYSI).

The protein resides in the cell membrane. This is an uncharacterized protein from Methanocaldococcus jannaschii (strain ATCC 43067 / DSM 2661 / JAL-1 / JCM 10045 / NBRC 100440) (Methanococcus jannaschii).